The chain runs to 368 residues: Agmatine deiminase (368 aa).

The active-site Amidino-cysteine intermediate is C357.

Belongs to the agmatine deiminase family. As to quaternary structure, homodimer.

It carries out the reaction agmatine + H2O = N-carbamoylputrescine + NH4(+). Its pathway is amine and polyamine biosynthesis; putrescine biosynthesis via agmatine pathway; N-carbamoylputrescine from agmatine: step 1/1. In terms of biological role, mediates the hydrolysis of agmatine into N-carbamoylputrescine in the arginine decarboxylase (ADC) pathway of putrescine biosynthesis, a basic polyamine. The sequence is that of Agmatine deiminase from Pseudomonas syringae pv. tomato (strain ATCC BAA-871 / DC3000).